The chain runs to 828 residues: Chitin synthase 7 (828 aa).

6 helical membrane passes run 17–37 (VIVG…VAAF), 57–77 (AVVV…IMVV), 95–115 (VGLQ…PWLF), 444–464 (FMQN…LAIL), 473–493 (LPVG…IYFG), and 501–521 (IWLY…YMVY). The N-linked (GlcNAc...) asparagine glycan is linked to Asn-615. 2 stretches are compositionally biased toward low complexity: residues 740–752 (SLVS…SNSN) and 813–822 (SNNDPNNSNS). Disordered regions lie at residues 740–780 (SLVS…LGRA) and 793–828 (LEIG…HQQR). Residue Asn-818 is glycosylated (N-linked (GlcNAc...) asparagine).

This sequence belongs to the chitin synthase family. Class VII subfamily.

The protein localises to the membrane. It catalyses the reaction [(1-&gt;4)-N-acetyl-beta-D-glucosaminyl](n) + UDP-N-acetyl-alpha-D-glucosamine = [(1-&gt;4)-N-acetyl-beta-D-glucosaminyl](n+1) + UDP + H(+). In terms of biological role, polymerizes chitin, a structural polymer of the cell wall and septum, by transferring the sugar moiety of UDP-GlcNAc to the non-reducing end of the growing chitin polymer. Required for normal appressorial chitin content and for the normal formation and function of these infection structures. The sequence is that of Chitin synthase 7 from Pyricularia oryzae (strain 70-15 / ATCC MYA-4617 / FGSC 8958) (Rice blast fungus).